Here is a 442-residue protein sequence, read N- to C-terminus: Phosphoglucosamine mutase (442 aa).

The active-site Phosphoserine intermediate is serine 103. 4 residues coordinate Mg(2+): serine 103, aspartate 241, aspartate 243, and aspartate 245. Serine 103 carries the post-translational modification Phosphoserine.

The protein belongs to the phosphohexose mutase family. Mg(2+) serves as cofactor. Post-translationally, activated by phosphorylation.

The catalysed reaction is alpha-D-glucosamine 1-phosphate = D-glucosamine 6-phosphate. Catalyzes the conversion of glucosamine-6-phosphate to glucosamine-1-phosphate. In Deinococcus deserti (strain DSM 17065 / CIP 109153 / LMG 22923 / VCD115), this protein is Phosphoglucosamine mutase.